Reading from the N-terminus, the 229-residue chain is Peptidase E (229 aa).

Residues S120, D135, and H157 each act as charge relay system in the active site.

The protein belongs to the peptidase S51 family.

The protein localises to the cytoplasm. The enzyme catalyses Dipeptidase E catalyzes the hydrolysis of dipeptides Asp-|-Xaa. It does not act on peptides with N-terminal Glu, Asn or Gln, nor does it cleave isoaspartyl peptides.. Hydrolyzes dipeptides containing N-terminal aspartate residues. May play a role in allowing the cell to use peptide aspartate to spare carbon otherwise required for the synthesis of the aspartate family of amino acids. This is Peptidase E from Shigella sonnei (strain Ss046).